The sequence spans 133 residues: ATP synthase epsilon chain, chloroplastic (133 aa).

The protein belongs to the ATPase epsilon chain family. As to quaternary structure, F-type ATPases have 2 components, CF(1) - the catalytic core - and CF(0) - the membrane proton channel. CF(1) has five subunits: alpha(3), beta(3), gamma(1), delta(1), epsilon(1). CF(0) has three main subunits: a, b and c.

The protein resides in the plastid. Its subcellular location is the chloroplast thylakoid membrane. Its function is as follows. Produces ATP from ADP in the presence of a proton gradient across the membrane. This is ATP synthase epsilon chain, chloroplastic from Cyanidium caldarium (Red alga).